A 592-amino-acid polypeptide reads, in one-letter code: ATP-dependent lipid A-core flippase (592 aa).

Helical transmembrane passes span 31–51 (LSSFILAMVAMGVVAATEGII), 76–96 (AMLVGIAVVRGVAQFGATYFL), 134–154 (AVIFEVNQVLQVLTGVFITLV), 161–181 (LALLIFLFYTNWRLTLVVAVI), 261–281 (VTQFLAALALSVILAIAMVQA), and 288–308 (VGGFTGFVMAMLLLISPLKHL). In terms of domain architecture, ABC transmembrane type-1 spans 35–317 (ILAMVAMGVV…LTDVNQPMQR (283 aa)). An ABC transporter domain is found at 349–587 (LRFEHVTFRY…DGLYAGLHRI (239 aa)). 383–390 (GPSGSGKT) lines the ATP pocket.

Belongs to the ABC transporter superfamily. Lipid exporter (TC 3.A.1.106) family. In terms of assembly, homodimer.

The protein resides in the cell inner membrane. The enzyme catalyses ATP + H2O + lipid A-core oligosaccharideSide 1 = ADP + phosphate + lipid A-core oligosaccharideSide 2.. Its function is as follows. Involved in lipopolysaccharide (LPS) biosynthesis. Translocates lipid A-core from the inner to the outer leaflet of the inner membrane. Transmembrane domains (TMD) form a pore in the inner membrane and the ATP-binding domain (NBD) is responsible for energy generation. The chain is ATP-dependent lipid A-core flippase from Ralstonia nicotianae (strain ATCC BAA-1114 / GMI1000) (Ralstonia solanacearum).